Here is a 348-residue protein sequence, read N- to C-terminus: Probable dual-specificity RNA methyltransferase RlmN (348 aa).

Glu-93 (proton acceptor) is an active-site residue. Positions 99–333 (TEKRLTACLS…VSLRKSRGLD (235 aa)) constitute a Radical SAM core domain. Residues Cys-106 and Cys-338 are joined by a disulfide bond. 3 residues coordinate [4Fe-4S] cluster: Cys-113, Cys-117, and Cys-120. Residues 160 to 161 (GE), Ser-190, 219 to 221 (SLH), and Asn-295 each bind S-adenosyl-L-methionine. The active-site S-methylcysteine intermediate is the Cys-338.

It belongs to the radical SAM superfamily. RlmN family. [4Fe-4S] cluster is required as a cofactor.

Its subcellular location is the cytoplasm. The catalysed reaction is adenosine(2503) in 23S rRNA + 2 reduced [2Fe-2S]-[ferredoxin] + 2 S-adenosyl-L-methionine = 2-methyladenosine(2503) in 23S rRNA + 5'-deoxyadenosine + L-methionine + 2 oxidized [2Fe-2S]-[ferredoxin] + S-adenosyl-L-homocysteine. It catalyses the reaction adenosine(37) in tRNA + 2 reduced [2Fe-2S]-[ferredoxin] + 2 S-adenosyl-L-methionine = 2-methyladenosine(37) in tRNA + 5'-deoxyadenosine + L-methionine + 2 oxidized [2Fe-2S]-[ferredoxin] + S-adenosyl-L-homocysteine. Its function is as follows. Specifically methylates position 2 of adenine 2503 in 23S rRNA and position 2 of adenine 37 in tRNAs. The polypeptide is Probable dual-specificity RNA methyltransferase RlmN (Prochlorococcus marinus (strain AS9601)).